We begin with the raw amino-acid sequence, 400 residues long: Argininosuccinate synthase (400 aa).

Residues 6 to 14 (AYSGGLDTS) and Ala-33 each bind ATP. 2 residues coordinate L-citrulline: Tyr-84 and Ser-89. Residue Gly-114 coordinates ATP. The L-aspartate site is built by Thr-116, Asn-120, and Asp-121. Asn-120 is an L-citrulline binding site. Residues Arg-124, Ser-173, Ser-182, Glu-258, and Tyr-270 each coordinate L-citrulline.

Belongs to the argininosuccinate synthase family. Type 1 subfamily. In terms of assembly, homotetramer.

The protein resides in the cytoplasm. It carries out the reaction L-citrulline + L-aspartate + ATP = 2-(N(omega)-L-arginino)succinate + AMP + diphosphate + H(+). The protein operates within amino-acid biosynthesis; L-arginine biosynthesis; L-arginine from L-ornithine and carbamoyl phosphate: step 2/3. In Thermus thermophilus (strain ATCC 27634 / DSM 579 / HB8), this protein is Argininosuccinate synthase.